The chain runs to 749 residues: 5-methyltetrahydropteroyltriglutamate--homocysteine methyltransferase (749 aa).

5-methyltetrahydropteroyltri-L-glutamate-binding positions include 15–18 (RELK) and Lys-114. Residues 425 to 427 (IGS) and Glu-478 contribute to the L-homocysteine site. L-methionine contacts are provided by residues 425-427 (IGS) and Glu-478. Trp-555 is a 5-methyltetrahydropteroyltri-L-glutamate binding site. Residue Asp-593 participates in L-homocysteine binding. Asp-593 serves as a coordination point for L-methionine. Residue Glu-599 coordinates 5-methyltetrahydropteroyltri-L-glutamate. His-636, Cys-638, and Glu-660 together coordinate Zn(2+). His-689 functions as the Proton donor in the catalytic mechanism. Zn(2+) is bound at residue Cys-721.

This sequence belongs to the vitamin-B12 independent methionine synthase family. The cofactor is Zn(2+).

It carries out the reaction 5-methyltetrahydropteroyltri-L-glutamate + L-homocysteine = tetrahydropteroyltri-L-glutamate + L-methionine. It functions in the pathway amino-acid biosynthesis; L-methionine biosynthesis via de novo pathway; L-methionine from L-homocysteine (MetE route): step 1/1. Its function is as follows. Catalyzes the transfer of a methyl group from 5-methyltetrahydrofolate to homocysteine resulting in methionine formation. The polypeptide is 5-methyltetrahydropteroyltriglutamate--homocysteine methyltransferase (Streptococcus suis (strain 05ZYH33)).